The chain runs to 138 residues: Basic phospholipase A2 PLA-N (138 aa).

The N-terminal stretch at 1-16 (MRTLWIMAVLLVGVEG) is a signal peptide. Disulfide bonds link cysteine 42/cysteine 131, cysteine 44/cysteine 60, cysteine 59/cysteine 111, cysteine 65/cysteine 138, cysteine 66/cysteine 104, cysteine 73/cysteine 97, and cysteine 91/cysteine 102. Residues tyrosine 43, glycine 45, and glycine 47 each coordinate Ca(2+). Residue histidine 63 is part of the active site. Aspartate 64 is a Ca(2+) binding site. Residue aspartate 105 is part of the active site.

This sequence belongs to the phospholipase A2 family. Group II subfamily. D49 sub-subfamily. Ca(2+) serves as cofactor. Expressed by the venom gland.

The protein localises to the secreted. It catalyses the reaction a 1,2-diacyl-sn-glycero-3-phosphocholine + H2O = a 1-acyl-sn-glycero-3-phosphocholine + a fatty acid + H(+). Snake venom phospholipase A2 (PLA2) that displays edema-inducing activities, as well as presynaptic neurotoxicity and myotoxicity. PLA2 catalyzes the calcium-dependent hydrolysis of the 2-acyl groups in 3-sn-phosphoglycerides. In Protobothrops flavoviridis (Habu), this protein is Basic phospholipase A2 PLA-N.